Consider the following 560-residue polypeptide: Protein NRT1/ PTR FAMILY 2.5 (560 aa).

The disordered stretch occupies residues 1–20; sequence MADSKSGDTEVAHRSSDPSE. 12 helical membrane-spanning segments follow: residues 34 to 54, 77 to 97, 101 to 121, 141 to 161, 177 to 197, 207 to 227, 323 to 343, 372 to 392, 404 to 424, 441 to 461, 480 to 500, and 520 to 540; these read TLLG…VFLI, MLPV…PVIS, FISL…YLMP, ILYV…FTLA, FFNW…TAIV, LGFG…IAGV, AILR…PVAV, VIVL…IYPM, LQQV…SAVV, VLWL…HFPA, SLTS…IDVI, and YWVV…CSWF.

It belongs to the major facilitator superfamily. Proton-dependent oligopeptide transporter (POT/PTR) (TC 2.A.17) family. Expressed in the root epidermis or cortex.

Its subcellular location is the membrane. Functionally, transporter involved in a passive nitrate efflux. The polypeptide is Protein NRT1/ PTR FAMILY 2.5 (NPF2.5) (Arabidopsis thaliana (Mouse-ear cress)).